The following is a 347-amino-acid chain: Quinolinate synthase (347 aa).

The iminosuccinate site is built by histidine 47 and serine 68. Residue cysteine 113 coordinates [4Fe-4S] cluster. Residues 139 to 141 (YAN) and serine 156 contribute to the iminosuccinate site. Residue cysteine 200 participates in [4Fe-4S] cluster binding. Iminosuccinate is bound by residues 226 to 228 (HPE) and threonine 243. Residue cysteine 297 coordinates [4Fe-4S] cluster.

It belongs to the quinolinate synthase family. Type 1 subfamily. The cofactor is [4Fe-4S] cluster.

Its subcellular location is the cytoplasm. The catalysed reaction is iminosuccinate + dihydroxyacetone phosphate = quinolinate + phosphate + 2 H2O + H(+). The protein operates within cofactor biosynthesis; NAD(+) biosynthesis; quinolinate from iminoaspartate: step 1/1. In terms of biological role, catalyzes the condensation of iminoaspartate with dihydroxyacetone phosphate to form quinolinate. The chain is Quinolinate synthase from Escherichia coli (strain K12 / MC4100 / BW2952).